A 429-amino-acid chain; its full sequence is Small ribosomal subunit protein mS47 (429 aa).

Substrate contacts are provided by E141, G166, E189, and D197.

This sequence belongs to the enoyl-CoA hydratase/isomerase family. Mitochondrion-specific ribosomal protein mS47 subfamily. As to quaternary structure, component of the mitochondrial small ribosomal subunit (mt-SSU). Mature yeast 74S mitochondrial ribosomes consist of a small (37S) and a large (54S) subunit. The 37S small subunit contains a 15S ribosomal RNA (15S mt-rRNA) and at least 32 different proteins. The 54S large subunit contains a 21S rRNA (21S mt-rRNA) and at least 45 different proteins. mS47/snr1 forms a protuberance of the yeast mitoribosome and retains a solvent-exposed cavity likely capable of accommodating a substrate, in accordance with it being an active enzyme as well as an integral constituent of the mitoribosome.

It localises to the mitochondrion. The catalysed reaction is 3-hydroxy-2-methylpropanoyl-CoA + H2O = 3-hydroxy-2-methylpropanoate + CoA + H(+). The protein operates within amino-acid degradation; L-valine degradation. Its function is as follows. Component of the mitochondrial ribosome (mitoribosome), a dedicated translation machinery responsible for the synthesis of mitochondrial genome-encoded proteins, including at least some of the essential transmembrane subunits of the mitochondrial respiratory chain. The mitoribosomes are attached to the mitochondrial inner membrane and translation products are cotranslationally integrated into the membrane. mS47/snr1 has enzymatic activity in vitro, and is able to catalyze the specific hydrolysis of 3-hydroxyisobutyryl-CoA (HIBYL-CoA). However, because the turnover rate of mS47/snr1 is only a fraction of that of the homologous mammalian enzyme, the physiological function of this activity remains unclear. Has an indirect role in endocytic membrane trafficking. The polypeptide is Small ribosomal subunit protein mS47 (snr1) (Schizosaccharomyces pombe (strain 972 / ATCC 24843) (Fission yeast)).